A 151-amino-acid polypeptide reads, in one-letter code: MTETTPAPQTPAAPAGPAQSFVLERPIQTVGRRKEAVVRVRLVPGTGKFDLNGRSLEDYFPNKVHQQLIKAPLVTVDRVESFDIFAHLGGGGPSGQAGALRLGIARALILVSPEDRPALKKAGFLTRDPRATERKKYGLKKARKAPQYSKR.

Over residues 1-19 (MTETTPAPQTPAAPAGPAQ) the composition is skewed to low complexity. Disordered stretches follow at residues 1–20 (MTETTPAPQTPAAPAGPAQS) and 121–151 (KAGFLTRDPRATERKKYGLKKARKAPQYSKR). The span at 127-136 (RDPRATERKK) shows a compositional bias: basic and acidic residues. A compositionally biased stretch (basic residues) spans 137–151 (YGLKKARKAPQYSKR).

The protein belongs to the universal ribosomal protein uS9 family.

The protein is Small ribosomal subunit protein uS9 (rpsI) of Mycobacterium bovis (strain ATCC BAA-935 / AF2122/97).